The primary structure comprises 333 residues: Cathepsin M (333 aa).

The signal sequence occupies residues 1-15; it reads MTSAIFLAMLCLGMA. A propeptide spans 16–113 (activation peptide); it reads LPSPAPDPIL…KSVQKRLSVN (98 aa). 2 disulfide bridges follow: cysteine 135–cysteine 178 and cysteine 169–cysteine 211. Residue cysteine 138 is part of the active site. Residues asparagine 217, asparagine 221, and asparagine 268 are each glycosylated (N-linked (GlcNAc...) asparagine). Cysteine 269 and cysteine 322 are disulfide-bonded. Residues histidine 276 and asparagine 300 contribute to the active site.

Belongs to the peptidase C1 family. Placenta.

It is found in the lysosome. The chain is Cathepsin M (Ctsm) from Mus musculus (Mouse).